Reading from the N-terminus, the 107-residue chain is UPF0473 protein llmg_0152 (107 aa).

The protein belongs to the UPF0473 family.

In Lactococcus lactis subsp. cremoris (strain MG1363), this protein is UPF0473 protein llmg_0152.